The following is a 283-amino-acid chain: Cyclin-C (283 aa).

The 99-residue stretch at 46–144 (NVIQALGEHL…VLECEFYLLE (99 aa)) folds into the Cyclin N-terminal domain. The tract at residues 252 to 283 (TILSKMPKPKPPPNSEGEQGPNGSQNSSYSQS) is disordered. The segment covering 272 to 283 (PNGSQNSSYSQS) has biased composition (polar residues). Residue Ser-275 is modified to Phosphoserine.

This sequence belongs to the cyclin family. Cyclin C subfamily. In terms of assembly, component of the Mediator complex, which is composed of MED1, MED4, MED6, MED7, MED8, MED9, MED10, MED11, MED12, MED13, MED13L, MED14, MED15, MED16, MED17, MED18, MED19, MED20, MED21, MED22, MED23, MED24, MED25, MED26, MED27, MED29, MED30, MED31, CCNC, CDK8 and CDC2L6/CDK11. The MED12, MED13, CCNC and CDK8 subunits form a distinct module termed the CDK8 module. Mediator containing the CDK8 module is less active than Mediator lacking this module in supporting transcriptional activation. Individual preparations of the Mediator complex lacking one or more distinct subunits have been variously termed ARC, CRSP, DRIP, PC2, SMCC and TRAP. The cylin/CDK pair formed by CCNC/CDK8 also associates with the large subunit of RNA polymerase II.

The protein resides in the nucleus. Functionally, component of the Mediator complex, a coactivator involved in regulated gene transcription of nearly all RNA polymerase II-dependent genes. Mediator functions as a bridge to convey information from gene-specific regulatory proteins to the basal RNA polymerase II transcription machinery. Mediator is recruited to promoters by direct interactions with regulatory proteins and serves as a scaffold for the assembly of a functional preinitiation complex with RNA polymerase II and the general transcription factors. Binds to and activates cyclin-dependent kinase CDK8 that phosphorylates the CTD (C-terminal domain) of the large subunit of RNA polymerase II (RNAp II), which may inhibit the formation of a transcription initiation complex. The protein is Cyclin-C (CCNC) of Bos taurus (Bovine).